The sequence spans 223 residues: Small ribosomal subunit protein uS3 (223 aa).

The KH type-2 domain maps to 39 to 107; sequence VREFLHKKLA…PVQINIEEVR (69 aa).

Belongs to the universal ribosomal protein uS3 family. Part of the 30S ribosomal subunit. Forms a tight complex with proteins S10 and S14.

In terms of biological role, binds the lower part of the 30S subunit head. Binds mRNA in the 70S ribosome, positioning it for translation. The polypeptide is Small ribosomal subunit protein uS3 (Francisella tularensis subsp. holarctica (strain FTNF002-00 / FTA)).